A 198-amino-acid polypeptide reads, in one-letter code: Chitin synthase 2 (198 aa).

The protein belongs to the chitin synthase family. Class III subfamily.

The protein resides in the cell membrane. The enzyme catalyses [(1-&gt;4)-N-acetyl-beta-D-glucosaminyl](n) + UDP-N-acetyl-alpha-D-glucosamine = [(1-&gt;4)-N-acetyl-beta-D-glucosaminyl](n+1) + UDP + H(+). In terms of biological role, polymerizes chitin, a structural polymer of the cell wall and septum, by transferring the sugar moiety of UDP-GlcNAc to the non-reducing end of the growing chitin polymer. The sequence is that of Chitin synthase 2 (CHS2) from Rhinocladiella atrovirens.